A 166-amino-acid chain; its full sequence is NADH-quinone oxidoreductase subunit A (166 aa).

3 consecutive transmembrane segments (helical) span residues 16 to 36 (FAVF…GAYF), 68 to 88 (FYLV…LYAW), and 98 to 118 (IGFI…FYLV). Residues 141–166 (RYASSHPQDISQELSVAGSQQANESR) are disordered.

This sequence belongs to the complex I subunit 3 family. As to quaternary structure, NDH-1 is composed of 13 different subunits. Subunits NuoA, H, J, K, L, M, N constitute the membrane sector of the complex.

The protein resides in the cell inner membrane. The enzyme catalyses a quinone + NADH + 5 H(+)(in) = a quinol + NAD(+) + 4 H(+)(out). In terms of biological role, NDH-1 shuttles electrons from NADH, via FMN and iron-sulfur (Fe-S) centers, to quinones in the respiratory chain. The immediate electron acceptor for the enzyme in this species is believed to be ubiquinone. Couples the redox reaction to proton translocation (for every two electrons transferred, four hydrogen ions are translocated across the cytoplasmic membrane), and thus conserves the redox energy in a proton gradient. This chain is NADH-quinone oxidoreductase subunit A, found in Yersinia pseudotuberculosis serotype O:1b (strain IP 31758).